A 357-amino-acid chain; its full sequence is Phosphoribosylformylglycinamidine cyclo-ligase (357 aa).

The protein belongs to the AIR synthase family.

The protein localises to the cytoplasm. The catalysed reaction is 2-formamido-N(1)-(5-O-phospho-beta-D-ribosyl)acetamidine + ATP = 5-amino-1-(5-phospho-beta-D-ribosyl)imidazole + ADP + phosphate + H(+). Its pathway is purine metabolism; IMP biosynthesis via de novo pathway; 5-amino-1-(5-phospho-D-ribosyl)imidazole from N(2)-formyl-N(1)-(5-phospho-D-ribosyl)glycinamide: step 2/2. The protein is Phosphoribosylformylglycinamidine cyclo-ligase of Allorhizobium ampelinum (strain ATCC BAA-846 / DSM 112012 / S4) (Agrobacterium vitis (strain S4)).